The sequence spans 471 residues: Glutamate--tRNA ligase (471 aa).

The short motif at P9–G19 is the 'HIGH' region element. Zn(2+) contacts are provided by C98, C100, C125, and D127. The short motif at K237–R241 is the 'KMSKS' region element. ATP is bound at residue K240.

This sequence belongs to the class-I aminoacyl-tRNA synthetase family. Glutamate--tRNA ligase type 1 subfamily. As to quaternary structure, monomer. The cofactor is Zn(2+).

It localises to the cytoplasm. It catalyses the reaction tRNA(Glu) + L-glutamate + ATP = L-glutamyl-tRNA(Glu) + AMP + diphosphate. Catalyzes the attachment of glutamate to tRNA(Glu) in a two-step reaction: glutamate is first activated by ATP to form Glu-AMP and then transferred to the acceptor end of tRNA(Glu). This chain is Glutamate--tRNA ligase, found in Aeromonas salmonicida (strain A449).